The primary structure comprises 239 residues: tRNA (guanine-N(7)-)-methyltransferase (239 aa).

Glu-69, Glu-94, Asp-121, and Asp-144 together coordinate S-adenosyl-L-methionine. Asp-144 is an active-site residue. Lys-148 lines the substrate pocket. Residues 150-155 (RHNKRR) form an interaction with RNA region. Residues Asp-180 and 217–220 (TKFE) each bind substrate.

It belongs to the class I-like SAM-binding methyltransferase superfamily. TrmB family. Monomer.

The enzyme catalyses guanosine(46) in tRNA + S-adenosyl-L-methionine = N(7)-methylguanosine(46) in tRNA + S-adenosyl-L-homocysteine. The protein operates within tRNA modification; N(7)-methylguanine-tRNA biosynthesis. In terms of biological role, catalyzes the formation of N(7)-methylguanine at position 46 (m7G46) in tRNA. This is tRNA (guanine-N(7)-)-methyltransferase from Salmonella paratyphi A (strain ATCC 9150 / SARB42).